Consider the following 417-residue polypeptide: DNA primase DnaG (417 aa).

A Toprim domain is found at 171–257; it reads DAIIIVEGRA…SVEDMARKEI (87 aa). Residues glutamate 177, aspartate 219, and aspartate 221 each coordinate Mg(2+). The tract at residues 278-325 is disordered; that stretch reads VPGEKRTQDLRPQKPGASEQNSIKKENVENENESTPTSFEPISEPAPP. The segment covering 279 to 289 has biased composition (basic and acidic residues); sequence PGEKRTQDLRP.

The protein belongs to the archaeal DnaG primase family. In terms of assembly, forms a ternary complex with MCM helicase and DNA. Requires Mg(2+) as cofactor.

The enzyme catalyses ssDNA + n NTP = ssDNA/pppN(pN)n-1 hybrid + (n-1) diphosphate.. In terms of biological role, RNA polymerase that catalyzes the synthesis of short RNA molecules used as primers for DNA polymerase during DNA replication. This is DNA primase DnaG from Methanosphaerula palustris (strain ATCC BAA-1556 / DSM 19958 / E1-9c).